A 164-amino-acid polypeptide reads, in one-letter code: Ferredoxin-type protein NapF (164 aa).

3 consecutive 4Fe-4S ferredoxin-type domains span residues 28 to 57, 58 to 89, and 132 to 161; these read GDESHFLTHCTRCDACINACENNILQRGAG, GYPSVNFKNNECSFCYACAQACPESLFSPRHT, and YQPQLNSQLCNGCGACAASCPVSAITAEYL. C37, C40, C43, C47, C69, C72, C75, C79, C141, C144, C147, and C151 together coordinate [4Fe-4S] cluster.

The protein belongs to the NapF family. As to quaternary structure, interacts with the cytoplasmic NapA precursor. The cofactor is [4Fe-4S] cluster.

It localises to the cytoplasm. In terms of biological role, could be involved in the maturation of NapA, the catalytic subunit of the periplasmic nitrate reductase, before its export into the periplasm. This chain is Ferredoxin-type protein NapF, found in Escherichia coli O157:H7.